Reading from the N-terminus, the 264-residue chain is Thymidylate synthase (264 aa).

Residue Arg21 participates in dUMP binding. His51 is a binding site for (6R)-5,10-methylene-5,6,7,8-tetrahydrofolate. Arg126–Arg127 lines the dUMP pocket. Cys146 functions as the Nucleophile in the catalytic mechanism. Residues Arg166–Asp169, Asn177, and His207–Tyr209 each bind dUMP. Residue Asp169 participates in (6R)-5,10-methylene-5,6,7,8-tetrahydrofolate binding. Ala263 is a binding site for (6R)-5,10-methylene-5,6,7,8-tetrahydrofolate.

It belongs to the thymidylate synthase family. Bacterial-type ThyA subfamily. As to quaternary structure, homodimer.

It is found in the cytoplasm. The catalysed reaction is dUMP + (6R)-5,10-methylene-5,6,7,8-tetrahydrofolate = 7,8-dihydrofolate + dTMP. The protein operates within pyrimidine metabolism; dTTP biosynthesis. Its function is as follows. Catalyzes the reductive methylation of 2'-deoxyuridine-5'-monophosphate (dUMP) to 2'-deoxythymidine-5'-monophosphate (dTMP) while utilizing 5,10-methylenetetrahydrofolate (mTHF) as the methyl donor and reductant in the reaction, yielding dihydrofolate (DHF) as a by-product. This enzymatic reaction provides an intracellular de novo source of dTMP, an essential precursor for DNA biosynthesis. The polypeptide is Thymidylate synthase (Yersinia pestis bv. Antiqua (strain Antiqua)).